The chain runs to 167 residues: NADH-quinone oxidoreductase subunit B 2 (167 aa).

The [4Fe-4S] cluster site is built by C39, C40, C104, and C134.

Belongs to the complex I 20 kDa subunit family. As to quaternary structure, NDH-1 is composed of 14 different subunits. Subunits NuoB, C, D, E, F, and G constitute the peripheral sector of the complex. Requires [4Fe-4S] cluster as cofactor.

It is found in the cell inner membrane. The enzyme catalyses a quinone + NADH + 5 H(+)(in) = a quinol + NAD(+) + 4 H(+)(out). In terms of biological role, NDH-1 shuttles electrons from NADH, via FMN and iron-sulfur (Fe-S) centers, to quinones in the respiratory chain. Couples the redox reaction to proton translocation (for every two electrons transferred, four hydrogen ions are translocated across the cytoplasmic membrane), and thus conserves the redox energy in a proton gradient. This is NADH-quinone oxidoreductase subunit B 2 from Burkholderia mallei (strain NCTC 10247).